A 186-amino-acid polypeptide reads, in one-letter code: Potassium-transporting ATPase KdpC subunit (186 aa).

Residues 9 to 29 (AAVVLFGGCLLVLGLLYPLAM) form a helical membrane-spanning segment.

The protein belongs to the KdpC family. The system is composed of three essential subunits: KdpA, KdpB and KdpC.

It localises to the cell membrane. Its function is as follows. Part of the high-affinity ATP-driven potassium transport (or Kdp) system, which catalyzes the hydrolysis of ATP coupled with the electrogenic transport of potassium into the cytoplasm. This subunit acts as a catalytic chaperone that increases the ATP-binding affinity of the ATP-hydrolyzing subunit KdpB by the formation of a transient KdpB/KdpC/ATP ternary complex. In Methanosphaerula palustris (strain ATCC BAA-1556 / DSM 19958 / E1-9c), this protein is Potassium-transporting ATPase KdpC subunit.